A 134-amino-acid chain; its full sequence is Small ribosomal subunit protein uS8c (134 aa).

The protein belongs to the universal ribosomal protein uS8 family. In terms of assembly, part of the 30S ribosomal subunit.

It is found in the plastid. The protein localises to the chloroplast. In terms of biological role, one of the primary rRNA binding proteins, it binds directly to 16S rRNA central domain where it helps coordinate assembly of the platform of the 30S subunit. This chain is Small ribosomal subunit protein uS8c (rps8), found in Draba nemorosa (Woodland whitlowgrass).